The primary structure comprises 155 residues: Nodulin-related protein 2 (155 aa).

Position 1 is an N-acetylmethionine (methionine 1). 2 disordered regions span residues 1–37 and 85–155; these read MNFI…PATN and DEKS…GFLK. The segment covering 95–106 has biased composition (basic and acidic residues); sequence DKAEKYLNDYES. Over residues 120-130 the composition is skewed to low complexity; it reads SQAEPASQPEP.

As to quaternary structure, interacts with DEK3.

Functionally, may be a negative regulator of the ABA signaling/synthesis pathway. The polypeptide is Nodulin-related protein 2 (Arabidopsis thaliana (Mouse-ear cress)).